Reading from the N-terminus, the 420-residue chain is L-rhamnose isomerase (420 aa).

Mn(2+)-binding residues include histidine 264, aspartate 296, and aspartate 298.

Belongs to the rhamnose isomerase family. It depends on Mn(2+) as a cofactor.

It localises to the cytoplasm. It catalyses the reaction L-rhamnopyranose = L-rhamnulose. It participates in carbohydrate degradation; L-rhamnose degradation; glycerone phosphate from L-rhamnose: step 1/3. Functionally, catalyzes the interconversion of L-rhamnose and L-rhamnulose. The sequence is that of L-rhamnose isomerase from Listeria monocytogenes serovar 1/2a (strain ATCC BAA-679 / EGD-e).